A 450-amino-acid polypeptide reads, in one-letter code: Na(+)/H(+) antiporter NhaA 2 (450 aa).

Helical transmembrane passes span 43 to 63 (VGGAVLLVASAVALVWANSPW), 86 to 106 (LTLGTWAADGLLAVFFLVVGL), 124 to 144 (ALPMAAAVGGMVVPALIFVAV), 155 to 175 (GWAIPTATDIAFAVAVLAVIS), 185 to 205 (FLLTLAVVDDLLAVTVIAVFY), 208 to 228 (EINLTALGLSIVPLALFALCV), 234 to 254 (SWWLLLPLGVATWVLVHESGV), 258 to 278 (VAGVLLGFTVPVLRSVAAGGP), 299 to 319 (VAVPVFAFFAAGVAIGGVSGL), 326 to 346 (PITLGIILGLVVGKPVGIFLT), 364 to 384 (WIDVFGVALLAGIGFTVSLLI), and 398 to 418 (FVKVGVLTGSLVAALIAAVLL).

Belongs to the NhaA Na(+)/H(+) (TC 2.A.33) antiporter family.

The protein localises to the cell membrane. The enzyme catalyses Na(+)(in) + 2 H(+)(out) = Na(+)(out) + 2 H(+)(in). Functionally, na(+)/H(+) antiporter that extrudes sodium in exchange for external protons. The protein is Na(+)/H(+) antiporter NhaA 2 of Mycobacterium sp. (strain JLS).